The sequence spans 185 residues: Elongation factor P (185 aa).

It belongs to the elongation factor P family.

Its subcellular location is the cytoplasm. It participates in protein biosynthesis; polypeptide chain elongation. Its function is as follows. Involved in peptide bond synthesis. Stimulates efficient translation and peptide-bond synthesis on native or reconstituted 70S ribosomes in vitro. Probably functions indirectly by altering the affinity of the ribosome for aminoacyl-tRNA, thus increasing their reactivity as acceptors for peptidyl transferase. The sequence is that of Elongation factor P from Bacillus anthracis (strain CDC 684 / NRRL 3495).